Here is a 585-residue protein sequence, read N- to C-terminus: RNA polymerase sigma factor RpoD (585 aa).

The tract at residues 67 to 93 is disordered; sequence PASTLVPKDDSKPARKKKESSASTSGS. A sigma-70 factor domain-2 region spans residues 351-421; the sequence is LVKANLRLVV…TRAISDQART (71 aa). The short motif at 375–378 is the Interaction with polymerase core subunit RpoC element; sequence DLIQ. The interval 430 to 506 is sigma-70 factor domain-3; sequence EQVNKVIRET…DTEVETPVNA (77 aa). Positions 519-572 are sigma-70 factor domain-4; it reads VLHTLPAREQKVIRMRFGLDDGYPQTLEEVGYQFKVTRERIRQIEAKALRRLRH. A DNA-binding region (H-T-H motif) is located at residues 545-564; the sequence is LEEVGYQFKVTRERIRQIEA.

It belongs to the sigma-70 factor family. RpoD/SigA subfamily. Interacts transiently with the RNA polymerase catalytic core.

The protein resides in the cytoplasm. Sigma factors are initiation factors that promote the attachment of RNA polymerase to specific initiation sites and are then released. This sigma factor is the primary sigma factor during exponential growth. The sequence is that of RNA polymerase sigma factor RpoD from Leptospira interrogans serogroup Icterohaemorrhagiae serovar copenhageni (strain Fiocruz L1-130).